Here is a 930-residue protein sequence, read N- to C-terminus: Short transient receptor potential channel 6 (930 aa).

The tract at residues 1 to 27 (MSQSPRFVTRRGGSLKAAPGAGTRRNE) is disordered. Residues 1–437 (MSQSPRFVTR…CSKMGKILRG (437 aa)) lie on the Cytoplasmic side of the membrane. 4 ANK repeats span residues 96-125 (IEEERFLDAAEYGNIPVVRKMLEECHSLNV), 131-160 (MGQNALQLAVANEHLEITELLLKKENLSRV), 162-188 (DALLLAISKGYVRIVEAILNHPAFAEG), and 217-246 (HDVTPIILAAHCQEYEIVHTLLRKGARIER). A helical transmembrane segment spans residues 438 to 458 (PFMKFVAHAASFTIFLGLLVM). Residues 459 to 486 (NAADRFEGTKLLPNETSTDNARQLFRMK) are Extracellular-facing. A helical transmembrane segment spans residues 487–507 (TSCFSWMEMLIISWVIGMIWA). Residues 508–520 (ECKEIWTQGPKEY) are Cytoplasmic-facing. Residues 521 to 541 (LFELWNMLDFGMLAIFAASFI) traverse the membrane as a helical segment. Residues 542-591 (ARFMAFWHASKAQSIIDANDTLKDLTKVTLGDNVKYYNLARIKWDPTDPQ) lie on the Extracellular side of the membrane. N-linked (GlcNAc...) asparagine glycosylation is present at Asn-560. Residues 592–612 (IISEGLYAIAVVLSFSRIAYI) form a helical membrane-spanning segment. The Cytoplasmic portion of the chain corresponds to 613–635 (LPANESFGPLQISLGRTVKDIFK). A helical transmembrane segment spans residues 636–656 (FMVIFIMVFVAFMIGMFNLYS). Residues 657–705 (YYIGAKQNEAFTTVEESFKTLFWAIFGLSEVKSVVINYNHKFIENIGYV) lie on the Extracellular side of the membrane. The chain crosses the membrane as a helical span at residues 706-726 (LYGVYNVTMVIVLLNMLIAMI). The Cytoplasmic segment spans residues 727 to 930 (NSSFQEIEDD…LEPKLEESRR (204 aa)). A Phosphoserine modification is found at Ser-814.

It belongs to the transient receptor (TC 1.A.4) family. STrpC subfamily. TRPC6 sub-subfamily. In terms of assembly, homodimer; forms channel complex. Interacts with MX1 and RNF24. Phosphorylated by FYN, leading to an increase of TRPC6 channel activity. Post-translationally, N-glycosylated. In terms of tissue distribution, lung and brain.

The protein localises to the cell membrane. It carries out the reaction Ca(2+)(in) = Ca(2+)(out). Its function is as follows. Forms a receptor-activated non-selective calcium permeant cation channel. Probably is operated by a phosphatidylinositol second messenger system activated by receptor tyrosine kinases or G-protein coupled receptors. Activated by diacylglycerol (DAG) in a membrane-delimited fashion, independently of protein kinase C. Seems not to be activated by intracellular calcium store depletion. The protein is Short transient receptor potential channel 6 of Mus musculus (Mouse).